The primary structure comprises 85 residues: Large ribosomal subunit protein bL27 (85 aa).

A disordered region spans residues 1–24; sequence MAHKKAGGSSRNGRDSNSKRLGVK.

It belongs to the bacterial ribosomal protein bL27 family.

This is Large ribosomal subunit protein bL27 from Nitrosospira multiformis (strain ATCC 25196 / NCIMB 11849 / C 71).